The chain runs to 442 residues: MSEILNIAKAAKASCEQLLNLSAQAKSQILNAVADELVRQKEAIKAANLLDLKAGENAGLSAALLDRLELTDARIEAMANGVREVAKFDEVVGEVLGGWRHPNGMQITKIRVPLGVLGIIYESRPNVSIDAAALALKSGNAVILRGSAAAISSNKFLVNLFNETGAKFGLPKGAVALVESTDKEAVGEMIKMHEFIDVLIPRGGKNLKDFIIQNATIPVIETGAGVCHIFVDESADVREAVEIIKNAKTQRPSTCNSVECVLLHERVAVKVLTSLARELDGVQLRVHEDLWAKFGENLGEISGDLDANLSGLKAEVKIGESSNGAQLVKADESDFGTEFLSLVLAVKCVSGVAEAVSYINSHSTHHSDAILSRDYANIERFLNAVDSAVVYANASTRFSDGGEFGFGGEIGISTQKLHARGPMGVRELTTSKYVVRGDGQIR.

Belongs to the gamma-glutamyl phosphate reductase family.

The protein localises to the cytoplasm. It catalyses the reaction L-glutamate 5-semialdehyde + phosphate + NADP(+) = L-glutamyl 5-phosphate + NADPH + H(+). It participates in amino-acid biosynthesis; L-proline biosynthesis; L-glutamate 5-semialdehyde from L-glutamate: step 2/2. Catalyzes the NADPH-dependent reduction of L-glutamate 5-phosphate into L-glutamate 5-semialdehyde and phosphate. The product spontaneously undergoes cyclization to form 1-pyrroline-5-carboxylate. This chain is Gamma-glutamyl phosphate reductase, found in Campylobacter curvus (strain 525.92).